A 799-amino-acid chain; its full sequence is Histidine biosynthesis trifunctional protein (799 aa).

The segment at 1–229 (MVLPILPLID…FIVEQENVGF (229 aa)) is phosphoribosyl-AMP cyclohydrolase. A phosphoribosyl-ATP pyrophosphohydrolase region spans residues 230 to 312 (CHLETMSCFG…FYFALAKLVT (83 aa)). The histidinol dehydrogenase stretch occupies residues 313–799 (NNVSLKDVEN…KLGLIPKDFQ (487 aa)). Residues Gln-618 and His-621 each contribute to the Zn(2+) site. Catalysis depends on residues Glu-687 and His-688. Zn(2+)-binding residues include Asp-721 and His-780.

The protein in the C-terminal section; belongs to the histidinol dehydrogenase family. It depends on Zn(2+) as a cofactor.

The enzyme catalyses 1-(5-phospho-beta-D-ribosyl)-5'-AMP + H2O = 1-(5-phospho-beta-D-ribosyl)-5-[(5-phospho-beta-D-ribosylamino)methylideneamino]imidazole-4-carboxamide. It catalyses the reaction 1-(5-phospho-beta-D-ribosyl)-ATP + H2O = 1-(5-phospho-beta-D-ribosyl)-5'-AMP + diphosphate + H(+). The catalysed reaction is L-histidinol + 2 NAD(+) + H2O = L-histidine + 2 NADH + 3 H(+). It functions in the pathway amino-acid biosynthesis; L-histidine biosynthesis; L-histidine from 5-phospho-alpha-D-ribose 1-diphosphate: step 2/9. The protein operates within amino-acid biosynthesis; L-histidine biosynthesis; L-histidine from 5-phospho-alpha-D-ribose 1-diphosphate: step 3/9. Its pathway is amino-acid biosynthesis; L-histidine biosynthesis; L-histidine from 5-phospho-alpha-D-ribose 1-diphosphate: step 9/9. The polypeptide is Histidine biosynthesis trifunctional protein (HIS4) (Saccharomyces bayanus (Yeast)).